We begin with the raw amino-acid sequence, 325 residues long: NADH-quinone oxidoreductase subunit H (325 aa).

9 consecutive transmembrane segments (helical) span residues Ile-11–Phe-31, Ser-50–Phe-69, Leu-81–Val-101, Ile-114–Gly-134, Leu-154–Phe-174, Leu-186–Val-206, Phe-237–Phe-257, Leu-265–Val-285, and Ile-304–Ala-324.

This sequence belongs to the complex I subunit 1 family. In terms of assembly, NDH-1 is composed of 13 different subunits. Subunits NuoA, H, J, K, L, M, N constitute the membrane sector of the complex.

Its subcellular location is the cell inner membrane. The enzyme catalyses a quinone + NADH + 5 H(+)(in) = a quinol + NAD(+) + 4 H(+)(out). Functionally, NDH-1 shuttles electrons from NADH, via FMN and iron-sulfur (Fe-S) centers, to quinones in the respiratory chain. The immediate electron acceptor for the enzyme in this species is believed to be ubiquinone. Couples the redox reaction to proton translocation (for every two electrons transferred, four hydrogen ions are translocated across the cytoplasmic membrane), and thus conserves the redox energy in a proton gradient. This subunit may bind ubiquinone. This Edwardsiella ictaluri (strain 93-146) protein is NADH-quinone oxidoreductase subunit H.